Consider the following 241-residue polypeptide: 2-C-methyl-D-erythritol 4-phosphate cytidylyltransferase (241 aa).

The protein belongs to the IspD/TarI cytidylyltransferase family. IspD subfamily.

It carries out the reaction 2-C-methyl-D-erythritol 4-phosphate + CTP + H(+) = 4-CDP-2-C-methyl-D-erythritol + diphosphate. Its pathway is isoprenoid biosynthesis; isopentenyl diphosphate biosynthesis via DXP pathway; isopentenyl diphosphate from 1-deoxy-D-xylulose 5-phosphate: step 2/6. Its function is as follows. Catalyzes the formation of 4-diphosphocytidyl-2-C-methyl-D-erythritol from CTP and 2-C-methyl-D-erythritol 4-phosphate (MEP). In Shewanella denitrificans (strain OS217 / ATCC BAA-1090 / DSM 15013), this protein is 2-C-methyl-D-erythritol 4-phosphate cytidylyltransferase.